Consider the following 1391-residue polypeptide: DNA-directed RNA polymerase subunit beta' (1391 aa).

Zn(2+) contacts are provided by Cys-72, Cys-74, Cys-87, and Cys-90. Mg(2+) contacts are provided by Asp-462, Asp-464, and Asp-466. Residues Cys-816, Cys-890, Cys-897, and Cys-900 each coordinate Zn(2+).

Belongs to the RNA polymerase beta' chain family. In terms of assembly, the RNAP catalytic core consists of 2 alpha, 1 beta, 1 beta' and 1 omega subunit. When a sigma factor is associated with the core the holoenzyme is formed, which can initiate transcription. It depends on Mg(2+) as a cofactor. Zn(2+) is required as a cofactor.

The catalysed reaction is RNA(n) + a ribonucleoside 5'-triphosphate = RNA(n+1) + diphosphate. Its function is as follows. DNA-dependent RNA polymerase catalyzes the transcription of DNA into RNA using the four ribonucleoside triphosphates as substrates. In Neisseria meningitidis serogroup B (strain ATCC BAA-335 / MC58), this protein is DNA-directed RNA polymerase subunit beta'.